Here is a 278-residue protein sequence, read N- to C-terminus: Protein Rv2133c (278 aa).

This is Protein Rv2133c from Mycobacterium tuberculosis (strain ATCC 25618 / H37Rv).